A 148-amino-acid chain; its full sequence is 3-hydroxyacyl-[acyl-carrier-protein] dehydratase FabZ (148 aa).

Residue histidine 55 is part of the active site.

Belongs to the thioester dehydratase family. FabZ subfamily.

It localises to the cytoplasm. The catalysed reaction is a (3R)-hydroxyacyl-[ACP] = a (2E)-enoyl-[ACP] + H2O. Functionally, involved in unsaturated fatty acids biosynthesis. Catalyzes the dehydration of short chain beta-hydroxyacyl-ACPs and long chain saturated and unsaturated beta-hydroxyacyl-ACPs. The protein is 3-hydroxyacyl-[acyl-carrier-protein] dehydratase FabZ of Haemophilus influenzae (strain PittEE).